A 181-amino-acid polypeptide reads, in one-letter code: Transmembrane protein 190 (181 aa).

The first 21 residues, 1-21 (MVASGIPALSLFLLMQGSVDG), serve as a signal peptide directing secretion. The Extracellular segment spans residues 22–81 (NGIQGFFYPWSCEGDVWDRESCGGQAAIENPNLCLRLRCCYRDGVCYHQRPDETMRRKHM). Residues 31-71 (WSCEGDVWDRESCGGQAAIENPNLCLRLRCCYRDGVCYHQR) enclose the P-type domain. 3 disulfides stabilise this stretch: C33–C61, C43–C60, and C55–C67. Residues 82-102 (WALGWTCGGLLFLISSICLFW) traverse the membrane as a helical segment. Residues 103-181 (WAKRRDMLHL…EETEGGEDED (79 aa)) lie on the Cytoplasmic side of the membrane. The segment at 135 to 181 (TLSDKKTSAGSVPTSLPTEGNADVSGATEGEGTTEGGEETEGGEDED) is disordered. Polar residues predominate over residues 142-152 (SAGSVPTSLPT). Acidic residues predominate over residues 170 to 181 (GGEETEGGEDED).

It localises to the membrane. The chain is Transmembrane protein 190 (TMEM190) from Canis lupus familiaris (Dog).